Here is a 390-residue protein sequence, read N- to C-terminus: Sulfate adenylyltransferase (390 aa).

The protein belongs to the sulfate adenylyltransferase family.

It catalyses the reaction sulfate + ATP + H(+) = adenosine 5'-phosphosulfate + diphosphate. The protein operates within sulfur metabolism; hydrogen sulfide biosynthesis; sulfite from sulfate: step 1/3. The chain is Sulfate adenylyltransferase (sat) from Synechocystis sp. (strain ATCC 27184 / PCC 6803 / Kazusa).